The chain runs to 340 residues: Guanine nucleotide-binding protein subunit beta-1 (340 aa).

WD repeat units follow at residues 53–83 (GHLAKIYAMHWASDSRNLVSASQDGKLIVWD), 95–125 (LRSSWVMTCAYAPSGSFVACGGLDNICSIYS), 141–170 (GHTGYLSCCRFLDDNQIVTSSGDMTCALWD), 182–212 (GHTGDVMSLSLSPDFRTFISGACDASAKLWD), 224–254 (GHESDINAVAFFPSGNAFATGSDDATCRLFD), 268–298 (NIICGITSVAFSKSGRLLFAGYDDFNCNVWD), and 310–340 (GHDNRVSCLGVTEDGMAVCTGSWDSFLKIWN).

This sequence belongs to the WD repeat G protein beta family. G proteins are composed of 3 units, alpha, beta and gamma. Interacts with G protein gamma subunits gpc-1 and gpc-2 and with egl-10 and eat-16. Interacts with goa-1 (in GDP-bound form).

Its function is as follows. Guanine nucleotide-binding proteins (G proteins) are involved as a modulator or transducer in various transmembrane signaling systems. The beta and gamma chains are required for the GTPase activity, for replacement of GDP by GTP, and for G protein-effector interaction. In the early embryo, controls the magnitude of the forces acting on centrosomes but is not required for generating asymmetric forces. This chain is Guanine nucleotide-binding protein subunit beta-1 (gpb-1), found in Caenorhabditis briggsae.